The chain runs to 96 residues: UPF0235 protein Tola_0962 (96 aa).

Belongs to the UPF0235 family.

The polypeptide is UPF0235 protein Tola_0962 (Tolumonas auensis (strain DSM 9187 / NBRC 110442 / TA 4)).